The sequence spans 3655 residues: NuA4 acetyltransferase complex subunit Tra2 (3655 aa).

An HEAT region spans residues 8–2459; the sequence is SLSSSIELLK…REYHIRLLGK (2452 aa). HEAT repeat units lie at residues 46-89, 94-131, 149-188, 230-268, 300-338, 374-412, 438-475, 606-643, 644-683, 735-772, 783-820, 828-867, 1100-1141, 1147-1184, 1193-1230, 1429-1470, 1665-1704, 1709-1746, 1753-1790, 1808-1846, 1891-1934, 1973-2011, 2036-2073, 2120-2157, 2183-2221, and 2401-2438; these read QLYA…CAHR, QYAQ…TFKF, TNLP…IIQQ, PGVQ…FIEF, LSEK…ILST, STLA…SIGL, FLLL…ETKS, IFLK…STSS, KFLN…VTVS, SLYK…ELCL, PYMS…LTPD, PYIE…RNRK, AFIL…QDHS, DRQV…QLFR, EIAP…LSNT, RKLL…LFHL, NLVS…FLLK, GILL…NVYA, IGAL…SEDV, QFPY…YIFS, EHRG…WNDL, SEAI…TDAN, ENLS…LSNT, DALH…LQIV, DQRR…NSPV, and DFVL…DEIP. The interval 2460–3655 is head; that stretch reads TPNVLETILT…QMDQLWQAWL (1196 aa). Residues 2484–3045 form the FAT domain; the sequence is LLVYLSKTYG…HFQLRTAYED (562 aa). The disordered stretch occupies residues 3059 to 3105; that stretch reads RGNSRLRENDSSSDNKSKDLSPSGSFSSVSQFNSKNGSPSSIDSSEK. Residues 3063–3077 show a composition bias toward basic and acidic residues; it reads RLRENDSSSDNKSKD. A compositionally biased stretch (low complexity) spans 3078 to 3092; sequence LSPSGSFSSVSQFNS. Residues 3285-3625 form the PI3K/PI4K catalytic domain; that stretch reads VPNVDLVRGH…VISHNVPEDL (341 aa). Positions 3291 to 3297 are G-loop; that stretch reads VRGHTMC. Residues 3491-3499 are catalytic loop; that stretch reads NIGGRSPQK. Positions 3511-3536 are activation loop; that stretch reads SQDLLPSMTSNQPVFHNTEAVPFRLT. Residues 3623–3655 enclose the FATC domain; that stretch reads EDLPLNQTLVDLVSQATNPQQLAQMDQLWQAWL.

This sequence belongs to the PI3/PI4-kinase family. TRA1 subfamily. Component of the NuA4 acetyltransferase complex. Tra1 is the scaffold subunit for binding to a variety of transcription activators or transcription factors to recruit NuA4 for targeted gene activation. Requires Hsp90 and its co-chaperone, the Triple-T complex (TTT), for its incorporation into NuA4. Interacts with tel2.

In terms of biological role, component of the NuA4 histone H4/H2A acetyltransferase involved in transcription and DNA repair. This is NuA4 acetyltransferase complex subunit Tra2 from Schizosaccharomyces pombe (strain 972 / ATCC 24843) (Fission yeast).